We begin with the raw amino-acid sequence, 72 residues long: Small proline-rich protein 2B (72 aa).

Residues 1–11 (MSYQQQQCKQP) show a composition bias toward low complexity. Residues 1-20 (MSYQQQQCKQPCQPPPVCPT) form a disordered region. A run of 3 repeats spans residues 21 to 29 (PKCPEPCPP), 30 to 38 (PKCPEPCPP), and 39 to 47 (PKCPQPCPP). Positions 21-47 (PKCPEPCPPPKCPEPCPPPKCPQPCPP) are 3 X 9 AA tandem repeats of P-K-C-P-[EQ]-P-C-P-P. The segment at 42-72 (PQPCPPQQCQQKYPPVTPSPPCQPKYPPKSK) is disordered. Residues 56 to 72 (PVTPSPPCQPKYPPKSK) are compositionally biased toward pro residues.

Belongs to the cornifin (SPRR) family. In terms of tissue distribution, suprabasal layers of squamous-differentiated tissues such as epidermis, esophagus, tongue and trachea.

Its subcellular location is the cytoplasm. Its function is as follows. Cross-linked envelope protein of keratinocytes. It is a keratinocyte protein that first appears in the cell cytosol, but ultimately becomes cross-linked to membrane proteins by transglutaminase. All that results in the formation of an insoluble envelope beneath the plasma membrane. In Homo sapiens (Human), this protein is Small proline-rich protein 2B (SPRR2B).